The sequence spans 110 residues: Phosphoribosyl-AMP cyclohydrolase (110 aa).

Aspartate 74 provides a ligand contact to Mg(2+). Cysteine 75 is a Zn(2+) binding site. Aspartate 76 and aspartate 78 together coordinate Mg(2+). Zn(2+) contacts are provided by cysteine 91 and cysteine 98.

Belongs to the PRA-CH family. As to quaternary structure, homodimer. The cofactor is Mg(2+). It depends on Zn(2+) as a cofactor.

Its subcellular location is the cytoplasm. The catalysed reaction is 1-(5-phospho-beta-D-ribosyl)-5'-AMP + H2O = 1-(5-phospho-beta-D-ribosyl)-5-[(5-phospho-beta-D-ribosylamino)methylideneamino]imidazole-4-carboxamide. It participates in amino-acid biosynthesis; L-histidine biosynthesis; L-histidine from 5-phospho-alpha-D-ribose 1-diphosphate: step 3/9. Functionally, catalyzes the hydrolysis of the adenine ring of phosphoribosyl-AMP. This Lacticaseibacillus paracasei (strain ATCC 334 / BCRC 17002 / CCUG 31169 / CIP 107868 / KCTC 3260 / NRRL B-441) (Lactobacillus paracasei) protein is Phosphoribosyl-AMP cyclohydrolase.